We begin with the raw amino-acid sequence, 261 residues long: Pyrroline-5-carboxylate reductase (261 aa).

Belongs to the pyrroline-5-carboxylate reductase family.

Its subcellular location is the cytoplasm. The catalysed reaction is L-proline + NADP(+) = (S)-1-pyrroline-5-carboxylate + NADPH + 2 H(+). It carries out the reaction L-proline + NAD(+) = (S)-1-pyrroline-5-carboxylate + NADH + 2 H(+). The protein operates within amino-acid biosynthesis; L-proline biosynthesis; L-proline from L-glutamate 5-semialdehyde: step 1/1. Functionally, catalyzes the reduction of 1-pyrroline-5-carboxylate (PCA) to L-proline. The protein is Pyrroline-5-carboxylate reductase of Thermus thermophilus (strain ATCC BAA-163 / DSM 7039 / HB27).